We begin with the raw amino-acid sequence, 152 residues long: MTEYKKVIAQNKKALFNYFIEERLEAGIVLKGSEVQSLRQGKASIEESHATDTGHEVFLYNCHIAEYEKANRFNHATRRPRKLLLHTKEIKKIIGRIRIKGYTLVALSMYFNKKNKVKVELGIAKGKKLHDKRESIQEKDWKRDQSRLIRQK.

This sequence belongs to the SmpB family.

The protein localises to the cytoplasm. In terms of biological role, required for rescue of stalled ribosomes mediated by trans-translation. Binds to transfer-messenger RNA (tmRNA), required for stable association of tmRNA with ribosomes. tmRNA and SmpB together mimic tRNA shape, replacing the anticodon stem-loop with SmpB. tmRNA is encoded by the ssrA gene; the 2 termini fold to resemble tRNA(Ala) and it encodes a 'tag peptide', a short internal open reading frame. During trans-translation Ala-aminoacylated tmRNA acts like a tRNA, entering the A-site of stalled ribosomes, displacing the stalled mRNA. The ribosome then switches to translate the ORF on the tmRNA; the nascent peptide is terminated with the 'tag peptide' encoded by the tmRNA and targeted for degradation. The ribosome is freed to recommence translation, which seems to be the essential function of trans-translation. The polypeptide is SsrA-binding protein (Rickettsia massiliae (strain Mtu5)).